The primary structure comprises 599 residues: Beta-myrcene synthase, chloroplastic (599 aa).

A chloroplast-targeting transit peptide spans 1–34 (MWSTISISMNVAILKKPLNFLHNSNNKASNPRCV). Residues D352, D356, D496, T500, and E504 each coordinate Mg(2+). A DDXXD motif motif is present at residues 352 to 356 (DDVYD).

This sequence belongs to the terpene synthase family. Mg(2+) is required as a cofactor. Mn(2+) serves as cofactor.

The protein resides in the plastid. It is found in the chloroplast. The catalysed reaction is (2E)-geranyl diphosphate = beta-myrcene + diphosphate. It participates in secondary metabolite biosynthesis; terpenoid biosynthesis. Functionally, monoterpene synthase that catalyzes the formation of beta-myrcene from geranyl diphosphate. The protein is Beta-myrcene synthase, chloroplastic (MYS) of Ocimum basilicum (Sweet basil).